A 329-amino-acid polypeptide reads, in one-letter code: GDP-mannose transporter (329 aa).

The Cytoplasmic portion of the chain corresponds to 1 to 11 (MADKGSVAAKS). Residues 12–32 (LTNSAPLSIFSYCAASILMTV) traverse the membrane as a helical segment. Over 33–40 (TNKYAVSG) the chain is Lumenal. The chain crosses the membrane as a helical span at residues 41-61 (VDFNFNFFLLAVQGIVCITLI). The Cytoplasmic segment spans residues 62-83 (SSLKQLNVITFREFNKVEAKKW). The helical transmembrane segment at 84–104 (FPIAVLLVVMIYTSSKALQYL) threads the bilayer. At 105 to 107 (SIP) the chain is on the lumenal side. A helical transmembrane segment spans residues 108–128 (IYTIFKNLTIILIAYGEVIWF). Residues 129-131 (GGR) lie on the Cytoplasmic side of the membrane. A helical transmembrane segment spans residues 132 to 152 (VTNLALGSFVLMVLSSAVASY). The Lumenal segment spans residues 153–163 (GDSNVDTGKLN). A helical transmembrane segment spans residues 164–184 (FNIGYFWMFTNCFSSAAFVLF). The Cytoplasmic segment spans residues 185 to 196 (MRKRIKLTNFKD). The chain crosses the membrane as a helical span at residues 197-217 (FDTMYYNNLLSIPILLFASLT). The Lumenal portion of the chain corresponds to 218–237 (TEDWSAKNIAQNFPEDTKYA). Residues 238–258 (VIASMIISGMSAVGISYTSAW) form a helical membrane-spanning segment. Topologically, residues 259 to 266 (CVRVTSST) are cytoplasmic. The chain crosses the membrane as a helical span at residues 267-287 (TYSMVGALNKLPIALSGLLFF). The Lumenal portion of the chain corresponds to 288–290 (KAP). A helical membrane pass occupies residues 291–311 (INFYSISSIFIGFAAGLVYAI). Residues 312 to 329 (AKQKQKKEDELQLPTDKS) are Cytoplasmic-facing.

It belongs to the TPT transporter family. SLC35D subfamily. Homooligomer.

Its subcellular location is the golgi apparatus membrane. It localises to the cytoplasmic vesicle membrane. It is found in the endoplasmic reticulum membrane. In terms of biological role, involved in the import of GDP-mannose from the cytoplasm into the Golgi lumen. The protein is GDP-mannose transporter (VIG4) of Komagataella pastoris (Yeast).